The sequence spans 297 residues: Large ribosomal subunit protein uL18 (297 aa).

An N-acetylglycine modification is found at Gly-2. N6-acetyllysine is present on residues Lys-5 and Lys-48. Phosphoserine is present on Ser-185. At Lys-220 the chain carries N6-acetyllysine; alternate. Residue Lys-220 forms a Glycyl lysine isopeptide (Lys-Gly) (interchain with G-Cter in SUMO1); alternate linkage. Residue Lys-220 forms a Glycyl lysine isopeptide (Lys-Gly) (interchain with G-Cter in SUMO2); alternate linkage. A Phosphothreonine modification is found at Thr-232. The disordered stretch occupies residues Tyr-253 to Ser-297. Over residues Lys-258–Arg-268 the composition is skewed to basic residues. Phosphoserine is present on Ser-272.

This sequence belongs to the universal ribosomal protein uL18 family. In terms of assembly, component of the large ribosomal subunit (LSU). Part of the 5S RNP complex, which is a LSU subcomplex composed of the 5S RNA, RPL5 and RPL11. Component of a hexameric 5S RNP precursor complex, composed of 5S RNA, RRS1, RPF2/BXDC1, RPL5, RPL11 and HEATR3; this complex acts as a precursor for ribosome assembly. Interacts with isoform 1 of NVL in an ATP-dependent manner. Interacts with RRP1B. Interacts with IPO5, IPO7 and KPNB1; these interactions may be involved in RPL5 nuclear import for the assembly of ribosomal subunits.

Its subcellular location is the cytoplasm. It is found in the nucleus. It localises to the nucleolus. Component of the ribosome, a large ribonucleoprotein complex responsible for the synthesis of proteins in the cell. The small ribosomal subunit (SSU) binds messenger RNAs (mRNAs) and translates the encoded message by selecting cognate aminoacyl-transfer RNA (tRNA) molecules. The large subunit (LSU) contains the ribosomal catalytic site termed the peptidyl transferase center (PTC), which catalyzes the formation of peptide bonds, thereby polymerizing the amino acids delivered by tRNAs into a polypeptide chain. The nascent polypeptides leave the ribosome through a tunnel in the LSU and interact with protein factors that function in enzymatic processing, targeting, and the membrane insertion of nascent chains at the exit of the ribosomal tunnel. As part of the 5S RNP/5S ribonucleoprotein particle it is an essential component of the LSU, required for its formation and the maturation of rRNAs. It also couples ribosome biogenesis to p53/TP53 activation. As part of the 5S RNP it accumulates in the nucleoplasm and inhibits MDM2, when ribosome biogenesis is perturbed, mediating the stabilization and the activation of TP53. In Homo sapiens (Human), this protein is Large ribosomal subunit protein uL18 (RPL5).